The chain runs to 253 residues: MAISIKSPKEIKALRKAGELTAQALALLEREVRPGVSLLELDKMAEDFIKSSHARPAFKGLYGFPNSVCMSLNEVVIHGIPTDYVLQEGDIIGLDLGVEVDGYYGDSALTLPIGAISPQDEKLLACSKESLMHAISSIRVGMHFKELSQILEGAITERGFVPLKGFCGHGIGKKPHEEPEIPNYLEKGVKANSGPKIKEGMVFCLEPMVCQKQGEPKILADKWSVVSVDGLNTSHHEHTIAIVGNKAVILTER.

Position 78 (histidine 78) interacts with substrate. The a divalent metal cation site is built by aspartate 95, aspartate 106, and histidine 169. Histidine 176 contributes to the substrate binding site. Positions 206 and 237 each coordinate a divalent metal cation.

The protein belongs to the peptidase M24A family. Methionine aminopeptidase type 1 subfamily. As to quaternary structure, monomer. Requires Co(2+) as cofactor. Zn(2+) serves as cofactor. Mn(2+) is required as a cofactor. The cofactor is Fe(2+).

The catalysed reaction is Release of N-terminal amino acids, preferentially methionine, from peptides and arylamides.. Its function is as follows. Removes the N-terminal methionine from nascent proteins. The N-terminal methionine is often cleaved when the second residue in the primary sequence is small and uncharged (Met-Ala-, Cys, Gly, Pro, Ser, Thr, or Val). Requires deformylation of the N(alpha)-formylated initiator methionine before it can be hydrolyzed. This is Methionine aminopeptidase from Helicobacter pylori (strain J99 / ATCC 700824) (Campylobacter pylori J99).